We begin with the raw amino-acid sequence, 431 residues long: IMP-specific 5'-nucleotidase 1 (431 aa).

K117 provides a ligand contact to ATP. D157 functions as the Nucleophile in the catalytic mechanism. 6 residues coordinate IMP: D157, D159, D165, T193, D349, and K357. Residues D157 and D159 each coordinate Mg(2+). Catalysis depends on D159, which acts as the Proton donor. A Mg(2+)-binding site is contributed by D388.

This sequence belongs to the ISN1 family. In terms of assembly, homotetramer. Mg(2+) is required as a cofactor.

The enzyme catalyses IMP + H2O = inosine + phosphate. Allosterically activated by ATP. ATP binding is a prerequisite to magnesium and substrate binding. ATP binds to 2 of the subunits in the homotetramer inducing a closure of these 2 subunits and the release of the C-terminal loop, thereby activating the enzyme. In terms of biological role, IMP-specific 5'-nucleotidase involved in IMP (inositol monophosphate) degradation. In Neurospora crassa (strain ATCC 24698 / 74-OR23-1A / CBS 708.71 / DSM 1257 / FGSC 987), this protein is IMP-specific 5'-nucleotidase 1 (isn-1).